Here is a 323-residue protein sequence, read N- to C-terminus: Dihydrodiol dehydrogenase 3 (323 aa).

NADP(+) contacts are provided by residues 20–24 and Asp-50; that span reads GFGTF. Tyr-55 acts as the Proton donor in catalysis. His-117 serves as a coordination point for substrate. NADP(+) contacts are provided by residues 166-167, Gln-190, 216-221, and 270-280; these read SN, YGALGS, and KSYNKKRIKEN.

This sequence belongs to the aldo/keto reductase family.

The protein localises to the cytoplasm. The sequence is that of Dihydrodiol dehydrogenase 3 from Bos taurus (Bovine).